The primary structure comprises 141 residues: Large ribosomal subunit protein uL11 (141 aa).

Belongs to the universal ribosomal protein uL11 family. As to quaternary structure, part of the ribosomal stalk of the 50S ribosomal subunit. Interacts with L10 and the large rRNA to form the base of the stalk. L10 forms an elongated spine to which L12 dimers bind in a sequential fashion forming a multimeric L10(L12)X complex. Post-translationally, one or more lysine residues are methylated.

Forms part of the ribosomal stalk which helps the ribosome interact with GTP-bound translation factors. This is Large ribosomal subunit protein uL11 from Chlamydia muridarum (strain MoPn / Nigg).